A 263-amino-acid polypeptide reads, in one-letter code: Glutamate/glutamine/aspartate/asparagine transport ATP-binding protein BztD (263 aa).

Residues 23–257 (IQISQMNKWY…PQSERTKQFL (235 aa)) form the ABC transporter domain. ATP is bound at residue 55–62 (GPSGSGKS).

This sequence belongs to the ABC transporter superfamily. BztB and BztC form a heterodimer which can form a membrane complex with a homodimer of BztD.

It localises to the cell membrane. In terms of biological role, part of a binding-protein-dependent transport system for glutamate, glutamine, aspartate, asparagine. Probably responsible for energy coupling to the transport system. The chain is Glutamate/glutamine/aspartate/asparagine transport ATP-binding protein BztD (bztD) from Rhodobacter capsulatus (strain ATCC BAA-309 / NBRC 16581 / SB1003).